We begin with the raw amino-acid sequence, 252 residues long: 4-hydroxy-tetrahydrodipicolinate reductase (252 aa).

NAD(+)-binding positions include glycine 8 to methionine 13, cysteine 85 to threonine 87, and serine 109 to methionine 112. Histidine 142 acts as the Proton donor/acceptor in catalysis. Histidine 143 provides a ligand contact to (S)-2,3,4,5-tetrahydrodipicolinate. Lysine 146 acts as the Proton donor in catalysis. Residue glycine 152–threonine 153 coordinates (S)-2,3,4,5-tetrahydrodipicolinate.

This sequence belongs to the DapB family.

It is found in the cytoplasm. The enzyme catalyses (S)-2,3,4,5-tetrahydrodipicolinate + NAD(+) + H2O = (2S,4S)-4-hydroxy-2,3,4,5-tetrahydrodipicolinate + NADH + H(+). It catalyses the reaction (S)-2,3,4,5-tetrahydrodipicolinate + NADP(+) + H2O = (2S,4S)-4-hydroxy-2,3,4,5-tetrahydrodipicolinate + NADPH + H(+). The protein operates within amino-acid biosynthesis; L-lysine biosynthesis via DAP pathway; (S)-tetrahydrodipicolinate from L-aspartate: step 4/4. Its function is as follows. Catalyzes the conversion of 4-hydroxy-tetrahydrodipicolinate (HTPA) to tetrahydrodipicolinate. The protein is 4-hydroxy-tetrahydrodipicolinate reductase of Clostridium novyi (strain NT).